A 241-amino-acid polypeptide reads, in one-letter code: MRLVEFYSEKKVCSYIDSKQSIFRYFHIQNVTPSFYYGLLERGWRRFGNYFFTPMCEGCTDCISIRTLIDDFTFSRNHKRLLKKAQNIDIYIQKPTITQAHIELYNRYHRVMRDKKGWEYTPTTPESYMDMFVEGHQDFGYEILYFIDSQLVGVGLVDALFDSITAVYFYYDHTFAHHSLGTLNILKQIQIGKENGLKYFYPGYWIKDHYCMGYKQRFTPFEVLKNIPDVFEAPIWEMYNG.

This sequence belongs to the R-transferase family. Bpt subfamily.

Its subcellular location is the cytoplasm. It carries out the reaction N-terminal L-glutamyl-[protein] + L-leucyl-tRNA(Leu) = N-terminal L-leucyl-L-glutamyl-[protein] + tRNA(Leu) + H(+). The catalysed reaction is N-terminal L-aspartyl-[protein] + L-leucyl-tRNA(Leu) = N-terminal L-leucyl-L-aspartyl-[protein] + tRNA(Leu) + H(+). In terms of biological role, functions in the N-end rule pathway of protein degradation where it conjugates Leu from its aminoacyl-tRNA to the N-termini of proteins containing an N-terminal aspartate or glutamate. This Helicobacter hepaticus (strain ATCC 51449 / 3B1) protein is Aspartate/glutamate leucyltransferase.